The sequence spans 388 residues: Diacylglycerol O-acyltransferase 2 (388 aa).

Topologically, residues 1 to 69 (MKTLIAAYSG…NRSKVEKQLQ (69 aa)) are cytoplasmic. The chain crosses the membrane as a helical span at residues 70 to 88 (VISVLQWVLSFLVLGVACS). Over 89 to 92 (VILM) the chain is Lumenal. The helical transmembrane segment at 93–112 (YTFCTDCWLIAVLYFTWLAF) threads the bilayer. The Cytoplasmic portion of the chain corresponds to 113–388 (DWNTPKKGGR…LPETEVLEVN (276 aa)).

This sequence belongs to the diacylglycerol acyltransferase family. In terms of assembly, forms multimeric complexes consisting of several DGAT2 subunits. Interacts with SLC27A1 and this interaction is enhanced in the presence of ZFYVE1. Predominantly expressed in liver. Also expressed in testis.

It is found in the endoplasmic reticulum membrane. Its subcellular location is the lipid droplet. It localises to the cytoplasm. The protein localises to the perinuclear region. The enzyme catalyses an acyl-CoA + a 1,2-diacyl-sn-glycerol = a triacyl-sn-glycerol + CoA. It catalyses the reaction all-trans-retinol + an acyl-CoA = an all-trans-retinyl ester + CoA. The catalysed reaction is 1,2-di-(9Z-octadecenoyl)-sn-glycerol + hexadecanoyl-CoA = 1,2-di-(9Z)-octadecenoyl-3-hexadecanoyl-sn-glycerol + CoA. It carries out the reaction 1,2-di-(9Z-octadecenoyl)-sn-glycerol + (9Z)-octadecenoyl-CoA = 1,2,3-tri-(9Z-octadecenoyl)-glycerol + CoA. The enzyme catalyses 1,3-di-(9Z-octadecenoyl)-glycerol + (9Z)-octadecenoyl-CoA = 1,2,3-tri-(9Z-octadecenoyl)-glycerol + CoA. It catalyses the reaction 2,3-di-(9Z)-octadecenoyl-sn-glycerol + (9Z)-octadecenoyl-CoA = 1,2,3-tri-(9Z-octadecenoyl)-glycerol + CoA. The catalysed reaction is 2-(9Z-octadecenoyl)-glycerol + hexadecanoyl-CoA = 1-hexadecanoyl-2-(9Z-octadecenoyl)-sn-glycerol + CoA. It carries out the reaction 2-(9Z-octadecenoyl)-glycerol + (9Z)-octadecenoyl-CoA = 1,2-di-(9Z-octadecenoyl)-sn-glycerol + CoA. The enzyme catalyses all-trans-retinol + hexadecanoyl-CoA = all-trans-retinyl hexadecanoate + CoA. It catalyses the reaction 1-O-(9Z-octadecenyl)-glycerol + (9Z)-octadecenoyl-CoA = 1-O-(9Z-octadecyl)-3-(9Z-octadecenoyl)-glycerol + CoA. The catalysed reaction is 1-(9Z-octadecenoyl)-glycerol + (9Z)-octadecenoyl-CoA = 1,2-di-(9Z-octadecenoyl)-glycerol + CoA. It functions in the pathway glycerolipid metabolism; triacylglycerol biosynthesis. Inhibited by niacin. Functionally, essential acyltransferase that catalyzes the terminal and only committed step in triacylglycerol synthesis by using diacylglycerol and fatty acyl CoA as substrates. Required for synthesis and storage of intracellular triglycerides. Probably plays a central role in cytosolic lipid accumulation. In liver, is primarily responsible for incorporating endogenously synthesized fatty acids into triglycerides. Also functions as an acyl-CoA retinol acyltransferase (ARAT). Also able to use 1-monoalkylglycerol (1-MAkG) as an acyl acceptor for the synthesis of monoalkyl-monoacylglycerol (MAMAG). The polypeptide is Diacylglycerol O-acyltransferase 2 (Mus musculus (Mouse)).